Consider the following 814-residue polypeptide: MKVHETRSHAHMSGDEQKGNLRKHKAEGKLPESEQSQKKAKPENDDGRSVNGAGDAASEYNEFCKAVEENLSIDQIKEVLEINGQDCSAPEETLLAQCQDLLFYGALAKCPLCGGTLICDNEKRFVCGGEISEWCSCVFSTKDPPRKEEPVKIPDSVMNSAISDLIKKHQDPKSRPKRELGSADKPFVGMMISLMGRLTRTHQYWKKKIERNGGKVSNTVQGVTCLVVSPAERERGGTSKMVEAMEQGLPVVSEAWLIDSVEKHEAQPLEAYDVVSDLSVEGKGIPWDKQDPSEEAIESFSAELKMYGKRGVYMDTKLQERGGKIFEKDGLLYNCAFSICDLGKGRNEYCIMQLVTVPDSNLNMYFKRGKVGDDPNAEERLEEWEDEEAAIKEFARLFEEIAGNEFEPWEREKKIQKKPHKFFPIDMDDGIEVRSGALGLRQLGIASAHCKLDSFVANFIKVLCGQEIYNYALMELGLDPPDLPMGMLTDIHLKRCEEVLLEFVEKVKTTKETGQKAEAMWADFSSRWFSLMHSTRPMRLHDVNELADHAASAFETVRDINTASRLIGDMRGDTLDDPLSDRYKKLGCKISVVDKESEDYKMVVKYLETTYEPVKVSDVEYGVSVQNVFAVESDAIPSLDDIKKLPNKVLLWCGSRSSNLLRHIYKGFLPAVCSLPVPGYMFGRAIVCSDAAAEAARYGFTAVDRPEGFLVLAVASLGEEVTEFTSPPEDTKTLEDKKIGVKGLGRKKTEESEHFMWRDDIKVPCGRLVPSEHKDSPLEYNEYAVYDPKQTSIRFLVEVKYEEKGTEIVDVEPE.

Composition is skewed to basic and acidic residues over residues 1–19 and 27–48; these read MKVH…EQKG and EGKL…DDGR. A disordered region spans residues 1-52; that stretch reads MKVHETRSHAHMSGDEQKGNLRKHKAEGKLPESEQSQKKAKPENDDGRSVNG. Residues 38 to 186 enclose the PADR1 zinc-binding domain; it reads KKAKPENDDG…KRELGSADKP (149 aa). The zinc ribbon stretch occupies residues 105–150; that stretch reads GALAKCPLCGGTLICDNEKRFVCGGEISEWCSCVFSTKDPPRKEEP. Cys-110, Cys-113, Cys-127, and Cys-137 together coordinate Zn(2+). TPR repeat units follow at residues 182–215 and 277–310; these read SADK…NGGK and DLSV…YGKR. Residues 187-274 enclose the BRCT domain; sequence FVGMMISLMG…EAQPLEAYDV (88 aa). One can recognise a WGR domain in the interval 322-422; that stretch reads GGKIFEKDGL…KKIQKKPHKF (101 aa). One can recognise a PARP alpha-helical domain in the interval 449 to 568; that stretch reads HCKLDSFVAN…DINTASRLIG (120 aa). One can recognise a PARP catalytic domain in the interval 577–808; it reads DPLSDRYKKL…VKYEEKGTEI (232 aa).

It belongs to the ARTD/PARP family.

The protein localises to the nucleus. The enzyme catalyses L-aspartyl-[protein] + NAD(+) = 4-O-(ADP-D-ribosyl)-L-aspartyl-[protein] + nicotinamide. It catalyses the reaction L-glutamyl-[protein] + NAD(+) = 5-O-(ADP-D-ribosyl)-L-glutamyl-[protein] + nicotinamide. Involved in the base excision repair (BER) pathway, by catalyzing the poly(ADP-ribosyl)ation of a limited number of acceptor proteins involved in chromatin architecture and in DNA metabolism. This modification follows DNA damages and appears as an obligatory step in a detection/signaling pathway leading to the reparation of DNA strand breaks. The polypeptide is Protein ADP-ribosyltransferase PARP3 (PARP3) (Arabidopsis thaliana (Mouse-ear cress)).